The primary structure comprises 355 residues: Protein RecA (355 aa).

65–72 lines the ATP pocket; it reads GPESSGKT.

This sequence belongs to the RecA family.

Its subcellular location is the cytoplasm. Functionally, can catalyze the hydrolysis of ATP in the presence of single-stranded DNA, the ATP-dependent uptake of single-stranded DNA by duplex DNA, and the ATP-dependent hybridization of homologous single-stranded DNAs. It interacts with LexA causing its activation and leading to its autocatalytic cleavage. The polypeptide is Protein RecA (Pseudomonas putida (strain W619)).